The chain runs to 237 residues: MSNAYKRVLLKLSGEALMGDDAFGINRATIERMVADIAEVVRLGTQLAVVIGGGNIFRGVAGGAAGMDRATADYMGMLATMMNALALQDAMRHAGIEARVQSALRMDQVVEPYIRPRAIRQLEEGRVVIFAAGTGNPFFTTDTAAALRGSEVGAEVVLKATKVDGVYSADPKKDPSATRYTTISFDEAISRNLQVMDATAFALCRDQKLPIRVFSINKPGALKRIVLGEDEGTLVHV.

Position 11–14 (11–14) interacts with ATP; the sequence is KLSG. Residue Gly-53 coordinates UMP. Gly-54 and Arg-58 together coordinate ATP. Residues Asp-73 and 134 to 141 each bind UMP; that span reads TGNPFFTT. ATP-binding residues include Thr-161, Tyr-167, and Asp-170.

It belongs to the UMP kinase family. As to quaternary structure, homohexamer.

Its subcellular location is the cytoplasm. The catalysed reaction is UMP + ATP = UDP + ADP. The protein operates within pyrimidine metabolism; CTP biosynthesis via de novo pathway; UDP from UMP (UMPK route): step 1/1. Its activity is regulated as follows. Inhibited by UTP. Its function is as follows. Catalyzes the reversible phosphorylation of UMP to UDP. The protein is Uridylate kinase of Burkholderia cenocepacia (strain HI2424).